A 235-amino-acid polypeptide reads, in one-letter code: Small ribosomal subunit protein uS10m (235 aa).

A mitochondrion-targeting transit peptide spans M1–F19.

It belongs to the universal ribosomal protein uS10 family. As to quaternary structure, part of the mitochondrial small ribosomal subunit.

The protein localises to the mitochondrion. Functionally, involved in mitochondrial genome encoded proteins translation. Involved in the binding of tRNA to the ribosomes. In Candida glabrata (strain ATCC 2001 / BCRC 20586 / JCM 3761 / NBRC 0622 / NRRL Y-65 / CBS 138) (Yeast), this protein is Small ribosomal subunit protein uS10m (RSM10).